A 1385-amino-acid chain; its full sequence is Coiled-coil domain-containing protein 7 (1385 aa).

Residues 299-330 (LDAEYKQMQCDFQLLSEEKLVLENELQKLKDK) adopt a coiled-coil conformation. A disordered region spans residues 329 to 364 (DKEKTKPTNNRTKKAVKTVKKKDKGKSEDSEKKMSP). A compositionally biased stretch (basic residues) spans 339-352 (RTKKAVKTVKKKDK). Basic and acidic residues predominate over residues 353-364 (GKSEDSEKKMSP). A coiled-coil region spans residues 374–411 (LDQVQKVARLEIENKVLQEQLKQALQEAEKAKHQLNYF). 3 disordered regions span residues 422–545 (GKTE…SKEV), 572–752 (TESK…EPNE), and 809–834 (TKKL…LKHQ). The segment covering 425 to 436 (ETTMQVGNSQTK) has biased composition (polar residues). Basic and acidic residues-rich tracts occupy residues 437–455 (VKGE…RKSL) and 481–490 (LIEKSSEKKR). Polar residues-rich tracts occupy residues 493-503 (PAISDLSQILK), 511-528 (LESS…YKSP), and 536-545 (LTTVSSSKEV). Positions 573-589 (ESKKADVSEEQLQKMTE) are enriched in basic and acidic residues. The span at 654-664 (RIQSETKNLKA) shows a compositional bias: polar residues. Composition is skewed to basic and acidic residues over residues 665–676 (TRNESFHSHNDV) and 685–697 (QDTK…EVKK). Residues 701-711 (FQDNQLSTHNE) show a composition bias toward polar residues. The segment covering 712–726 (VPNERLVVEHQESLS) has biased composition (basic and acidic residues).

In terms of tissue distribution, expressed in epithelium of normal cervix and cervical cancer. Overexpressed in early and interim cervical cancer.

In terms of biological role, may play a role in tumorigenesis. The chain is Coiled-coil domain-containing protein 7 (CCDC7) from Homo sapiens (Human).